The sequence spans 309 residues: tRNA dimethylallyltransferase (309 aa).

An ATP-binding site is contributed by 15–22 (GPTASGKS). A substrate-binding site is contributed by 17–22 (TASGKS). The tract at residues 40-43 (DSRQ) is interaction with substrate tRNA.

The protein belongs to the IPP transferase family. As to quaternary structure, monomer. Requires Mg(2+) as cofactor.

The enzyme catalyses adenosine(37) in tRNA + dimethylallyl diphosphate = N(6)-dimethylallyladenosine(37) in tRNA + diphosphate. Catalyzes the transfer of a dimethylallyl group onto the adenine at position 37 in tRNAs that read codons beginning with uridine, leading to the formation of N6-(dimethylallyl)adenosine (i(6)A). This chain is tRNA dimethylallyltransferase, found in Chlorobium phaeovibrioides (strain DSM 265 / 1930) (Prosthecochloris vibrioformis (strain DSM 265)).